The following is a 207-amino-acid chain: MRTHTVDHPLAAALLTTMRDERTPNAVFRAALCDLTGILVYEALREAPVDTYEINTPVAPATGARLAQPPLLVPVLRAGLGMVDAAAGLVPDARVGFVGIARDESTHQPVPYMESLPEDLAGVPVFVLDPMLATGGSMRHTLELLAARGATDITALCVVATPEGIATLERSGLPVRLVTAAVDEGLNENAYIVPGLGDAGDRQFGPR.

5-phospho-alpha-D-ribose 1-diphosphate-binding positions include arginine 77, arginine 102, and aspartate 129–serine 137. Residues isoleucine 192 and glycine 197–alanine 199 contribute to the uracil site. Aspartate 198 provides a ligand contact to 5-phospho-alpha-D-ribose 1-diphosphate.

It belongs to the UPRTase family. Mg(2+) serves as cofactor.

It catalyses the reaction UMP + diphosphate = 5-phospho-alpha-D-ribose 1-diphosphate + uracil. Its pathway is pyrimidine metabolism; UMP biosynthesis via salvage pathway; UMP from uracil: step 1/1. Its activity is regulated as follows. Allosterically activated by GTP. Functionally, catalyzes the conversion of uracil and 5-phospho-alpha-D-ribose 1-diphosphate (PRPP) to UMP and diphosphate. This is Uracil phosphoribosyltransferase from Nocardia farcinica (strain IFM 10152).